The primary structure comprises 570 residues: Protein NRT1/ PTR FAMILY 8.2 (570 aa).

Phosphothreonine is present on threonine 99. Transmembrane regions (helical) follow at residues 100-120, 136-156, 182-202, 210-230, 335-355, 370-390, 414-434, 454-474, 493-513, and 537-557; these read IASFVVIYIAGMTLLTISASV, AGQTAITFIALYLIALGTGGI, FFNWFYFVINVGAMIASSVLV, WGWGLGVPTVAMAIAVVFFFA, IWATGIVFASVYSQMGTVFVL, IPSASLSLFDTLSVLFWAPVY, IGIGLVISIFSMVSAGILEVA, IFWQVPQYFLVGCAEVFTFIG, ALSLTAIAFGNYLSTFLVTLV, and YFFWLLAGLSFLNFLVYLWIA.

It belongs to the major facilitator superfamily. Proton-dependent oligopeptide transporter (POT/PTR) (TC 2.A.17) family. In terms of tissue distribution, expressed in developing and germinating pollen grains and ovules.

It localises to the cell membrane. In terms of biological role, peptide transporter. Mediates the transport of di- and tripeptides. High affinity transporter. Involved in the uptake of peptides during pollen germination and tube growth. This Arabidopsis thaliana (Mouse-ear cress) protein is Protein NRT1/ PTR FAMILY 8.2 (NPF8.2).